We begin with the raw amino-acid sequence, 341 residues long: UDP-N-acetylenolpyruvoylglucosamine reductase (341 aa).

The 173-residue stretch at 13 to 185 (FGVEQSCLSM…TAVGLRLPKA (173 aa)) folds into the FAD-binding PCMH-type domain. Residue Arg161 is part of the active site. Residue Ser231 is the Proton donor of the active site. The active site involves Glu327.

This sequence belongs to the MurB family. FAD serves as cofactor.

It localises to the cytoplasm. The catalysed reaction is UDP-N-acetyl-alpha-D-muramate + NADP(+) = UDP-N-acetyl-3-O-(1-carboxyvinyl)-alpha-D-glucosamine + NADPH + H(+). The protein operates within cell wall biogenesis; peptidoglycan biosynthesis. Its function is as follows. Cell wall formation. The protein is UDP-N-acetylenolpyruvoylglucosamine reductase of Shewanella sp. (strain MR-7).